The primary structure comprises 716 residues: Eosinophil peroxidase (716 aa).

The first 18 residues, 1–18 (MMQQLLALVGALATLILT), serve as a signal peptide directing secretion. Positions 19 to 140 (QHAEGTAPAS…SGCALQDQAE (122 aa)) are excised as a propeptide. N-linked (GlcNAc...) asparagine glycans are attached at residues asparagine 53 and asparagine 114. A disulfide bond links cysteine 142 and cysteine 153. Aspartate 233 contributes to the heme b binding site. The Proton acceptor role is filled by histidine 234. Aspartate 235 is a binding site for Ca(2+). Cystine bridges form between cysteine 254–cysteine 264 and cysteine 258–cysteine 282. 4 residues coordinate Ca(2+): threonine 307, phenylalanine 309, aspartate 311, and serine 313. 2 N-linked (GlcNAc...) asparagine glycosylation sites follow: asparagine 328 and asparagine 364. A disulfide bridge connects residues cysteine 360 and cysteine 371. Positions 381 and 475 each coordinate heme b. At tyrosine 489 the chain carries 3'-nitrotyrosine. Disulfide bonds link cysteine 579–cysteine 636 and cysteine 677–cysteine 702. N-linked (GlcNAc...) asparagine glycosylation occurs at asparagine 709.

This sequence belongs to the peroxidase family. XPO subfamily. As to quaternary structure, tetramer of two light chains and two heavy chains. Ca(2+) is required as a cofactor. The cofactor is heme b.

It localises to the cytoplasmic granule. It catalyses the reaction 2 a phenolic donor + H2O2 = 2 a phenolic radical donor + 2 H2O. In terms of biological role, mediates tyrosine nitration of secondary granule proteins in mature resting eosinophils. This Mus musculus (Mouse) protein is Eosinophil peroxidase (Epx).